We begin with the raw amino-acid sequence, 573 residues long: Plasmepsin X (573 aa).

An N-terminal signal peptide occupies residues 1 to 26; it reads MKRISPLNTLFYLSLFFSYTFKGLKC. A propeptide spanning residues 27–221 is cleaved from the precursor; it reads TRIYKIGTKA…SSIEKNFIAL (195 aa). 2 cysteine pairs are disulfide-bonded: Cys39–Cys51 and Cys42–Cys48. Residues 167 to 211 form a disordered region; sequence KGNKNFTNNENNSDNENNSDNENNSDNENNLDNENNLDNENNSDN. Residues 183 to 203 show a composition bias toward acidic residues; sequence NNSDNENNSDNENNLDNENNL. The Peptidase A1 domain occupies 248-567; it reads FVGELLVGTP…ESRPSMVGVA (320 aa). Asp266 is an active-site residue. An intrachain disulfide couples Cys279 to Cys284. Asn334 carries N-linked (GlcNAc...) asparagine glycosylation. An intrachain disulfide couples Cys447 to Cys448. Asp457 is an active-site residue. The cysteines at positions 482 and 521 are disulfide-linked.

The protein belongs to the peptidase A1 family. Autocleaved into a p16 prodomain form and two mature forms p44 and p51.

It localises to the cytoplasmic vesicle. The protein localises to the secretory vesicle. Its activity is regulated as follows. Inhibited by aminohydantoin compounds such as CWHM-117. During the asexual blood stage, processes key proteins essential for merozoite egress and invasion of host erythrocytes. Cleaves and activates proteases SUB1 and SUB2. May process members of the EBL and Rh protein families. Also cleaves apical membrane protein AMA1. During the mosquito vector stage and probably in ookinetes, cleaves CelTOS. The polypeptide is Plasmepsin X (Plasmodium falciparum (isolate NF54)).